Reading from the N-terminus, the 480-residue chain is Adenosylhomocysteinase (480 aa).

Substrate contacts are provided by T63, D142, and E203. 204-206 (TTT) is an NAD(+) binding site. Residues K233 and D237 each contribute to the substrate site. Residues N238, 267–272 (GYGDVG), E290, N325, 346–348 (IGH), and N394 contribute to the NAD(+) site.

Belongs to the adenosylhomocysteinase family. It depends on NAD(+) as a cofactor.

The protein localises to the cytoplasm. It carries out the reaction S-adenosyl-L-homocysteine + H2O = L-homocysteine + adenosine. Its pathway is amino-acid biosynthesis; L-homocysteine biosynthesis; L-homocysteine from S-adenosyl-L-homocysteine: step 1/1. Functionally, may play a key role in the regulation of the intracellular concentration of adenosylhomocysteine. This is Adenosylhomocysteinase from Xylella fastidiosa (strain M12).